The following is a 660-amino-acid chain: Septation initiation protein sid4 (660 aa).

Disordered regions lie at residues Thr-79 to Phe-243, Ser-368 to Lys-396, and Arg-459 to Asn-503. Polar residues-rich tracts occupy residues Ser-125–Tyr-138, Ser-156–Lys-176, and Arg-222–Phe-243. Over residues Ser-384 to Lys-396 the composition is skewed to basic and acidic residues. Composition is skewed to polar residues over residues Arg-459–Lys-480 and Lys-488–Ser-497.

Homodimer. Interacts with cdc11, sad1, plo1 and dma1.

It is found in the cytoplasm. It localises to the cytoskeleton. Its subcellular location is the microtubule organizing center. The protein resides in the spindle pole body. Its function is as follows. Required for activation of the spg1 GTPase signaling cascade which leads to the initiation of septation and the subsequent termination of mitosis. May act as a scaffold at the spindle pole body to which other components of the spg1 signaling cascade attach. The sequence is that of Septation initiation protein sid4 (sid4) from Schizosaccharomyces pombe (strain 972 / ATCC 24843) (Fission yeast).